Here is a 296-residue protein sequence, read N- to C-terminus: F-box/LRR-repeat protein 15 (296 aa).

Positions 16 to 63 constitute an F-box domain; sequence LLDLPWEDVLVSHVFCHLPLRLLVSLQRVSKSFRSLIQVYLDNCRTFD. 5 LRR repeats span residues 138–159, 164–185, 190–211, 216–237, and 242–263; these read RLQH…RSLA, MLRS…CYLA, ELRA…EEVA, EMER…RTLA, and KLQS…GVLR.

The protein belongs to the FBXL15 family. As to quaternary structure, part of the SCF (SKP1-CUL1-F-box) E3 ubiquitin-protein ligase complex SCF(FBXL15).

It is found in the cytoplasm. Its pathway is protein modification; protein ubiquitination. Functionally, substrate recognition component of a SCF (SKP1-CUL1-F-box protein) E3 ubiquitin-protein ligase complex which mediates the ubiquitination and subsequent proteasomal degradation of target proteins. Acts as a positive regulator of the BMP signaling pathway. Required for dorsal/ventral pattern formation. This Danio rerio (Zebrafish) protein is F-box/LRR-repeat protein 15 (fbxl15).